Here is a 448-residue protein sequence, read N- to C-terminus: Tubulin alpha-5 chain (448 aa).

The MREC motif signature appears at 1 to 4 (MREC). Gln11 contributes to the GTP binding site. Lys40 carries the post-translational modification N6-acetyllysine. GTP is bound by residues Glu71, Ser140, Gly144, Thr145, Thr179, Asn206, and Asn228. A Mg(2+)-binding site is contributed by Glu71. Glu254 is an active-site residue.

It belongs to the tubulin family. As to quaternary structure, dimer of alpha and beta chains. A typical microtubule is a hollow water-filled tube with an outer diameter of 25 nm and an inner diameter of 15 nM. Alpha-beta heterodimers associate head-to-tail to form protofilaments running lengthwise along the microtubule wall with the beta-tubulin subunit facing the microtubule plus end conferring a structural polarity. Microtubules usually have 13 protofilaments but different protofilament numbers can be found in some organisms and specialized cells. The cofactor is Mg(2+). Some glutamate residues at the C-terminus are polyglycylated, resulting in polyglycine chains on the gamma-carboxyl group. Glycylation is mainly limited to tubulin incorporated into axonemes (cilia and flagella) whereas glutamylation is prevalent in neuronal cells, centrioles, axonemes, and the mitotic spindle. Both modifications can coexist on the same protein on adjacent residues, and lowering polyglycylation levels increases polyglutamylation, and reciprocally. The precise function of polyglycylation is still unclear. Post-translationally, some glutamate residues at the C-terminus are polyglutamylated, resulting in polyglutamate chains on the gamma-carboxyl group. Polyglutamylation plays a key role in microtubule severing by spastin (SPAST). SPAST preferentially recognizes and acts on microtubules decorated with short polyglutamate tails: severing activity by SPAST increases as the number of glutamates per tubulin rises from one to eight, but decreases beyond this glutamylation threshold. In terms of processing, acetylation of alpha chains at Lys-40 is located inside the microtubule lumen. This modification has been correlated with increased microtubule stability, intracellular transport and ciliary assembly.

The protein localises to the cytoplasm. The protein resides in the cytoskeleton. It catalyses the reaction GTP + H2O = GDP + phosphate + H(+). Tubulin is the major constituent of microtubules, a cylinder consisting of laterally associated linear protofilaments composed of alpha- and beta-tubulin heterodimers. Microtubules grow by the addition of GTP-tubulin dimers to the microtubule end, where a stabilizing cap forms. Below the cap, tubulin dimers are in GDP-bound state, owing to GTPase activity of alpha-tubulin. In Gallus gallus (Chicken), this protein is Tubulin alpha-5 chain.